A 100-amino-acid chain; its full sequence is Sodium-influx-stimulating peptide (100 aa).

Positions 1–23 (MLSSVALRYLLVLSLAFLAVVTS) are cleaved as a signal peptide.

Three disulfide bonds are present. As to expression, expressed by the yellow cells, peptidergic (neuroendocrine) neurons of the central nervous system.

In terms of biological role, stimulates integumental Na(+) uptake. Controls the activity of sodium pumps in the integument, pericardium, ureter and nephridial gland. This Lymnaea stagnalis (Great pond snail) protein is Sodium-influx-stimulating peptide (SIS).